The chain runs to 429 residues: S-adenosylmethionine synthase (429 aa).

His-14 is an ATP binding site. Asp-16 provides a ligand contact to Mg(2+). Glu-42 is a K(+) binding site. L-methionine contacts are provided by Glu-55 and Gln-98. Residues 98-108 form a flexible loop region; the sequence is QSADINRGVDR. Residues 165–167, 252–253, Asp-261, 267–268, Ala-284, and Lys-288 each bind ATP; these read DAK, KF, and RK. Residue Asp-261 coordinates L-methionine. Lys-292 contacts L-methionine.

It belongs to the AdoMet synthase family. As to quaternary structure, homotetramer; dimer of dimers. Mg(2+) serves as cofactor. The cofactor is K(+).

It is found in the cytoplasm. The catalysed reaction is L-methionine + ATP + H2O = S-adenosyl-L-methionine + phosphate + diphosphate. It functions in the pathway amino-acid biosynthesis; S-adenosyl-L-methionine biosynthesis; S-adenosyl-L-methionine from L-methionine: step 1/1. In terms of biological role, catalyzes the formation of S-adenosylmethionine (AdoMet) from methionine and ATP. The overall synthetic reaction is composed of two sequential steps, AdoMet formation and the subsequent tripolyphosphate hydrolysis which occurs prior to release of AdoMet from the enzyme. This chain is S-adenosylmethionine synthase, found in Porphyromonas gingivalis (strain ATCC 33277 / DSM 20709 / CIP 103683 / JCM 12257 / NCTC 11834 / 2561).